The primary structure comprises 274 residues: Purine nucleoside phosphorylase YlmD (274 aa).

Inosine is bound at residue 46–47 (LH). Zn(2+) contacts are provided by His80, Cys125, His142, Cys182, Cys183, Cys242, and Cys245. An inosine-binding site is contributed by Arg262.

Belongs to the purine nucleoside phosphorylase YfiH/LACC1 family. Requires Zn(2+) as cofactor.

The catalysed reaction is adenosine + phosphate = alpha-D-ribose 1-phosphate + adenine. It catalyses the reaction S-methyl-5'-thioadenosine + phosphate = 5-(methylsulfanyl)-alpha-D-ribose 1-phosphate + adenine. The enzyme catalyses inosine + phosphate = alpha-D-ribose 1-phosphate + hypoxanthine. It carries out the reaction adenosine + H2O + H(+) = inosine + NH4(+). Functionally, purine nucleoside enzyme that catalyzes the phosphorolysis of adenosine and inosine nucleosides, yielding D-ribose 1-phosphate and the respective free bases, adenine and hypoxanthine. Also catalyzes the phosphorolysis of S-methyl-5'-thioadenosine into adenine and S-methyl-5-thio-alpha-D-ribose 1-phosphate. Also has adenosine deaminase activity. This is Purine nucleoside phosphorylase YlmD from Geobacillus stearothermophilus (strain DSM 13240 / CIP 106956 / 10).